The following is a 31-amino-acid chain: Photosystem II reaction center protein Psb30 (31 aa).

Residues 5 to 25 (IQLTSLLLIVIAGPLVIALLF) form a helical membrane-spanning segment.

This sequence belongs to the Psb30/Ycf12 family. In terms of assembly, PSII is composed of 1 copy each of membrane proteins PsbA, PsbB, PsbC, PsbD, PsbE, PsbF, PsbH, PsbI, PsbJ, PsbK, PsbL, PsbM, PsbT, PsbX, PsbY, PsbZ, Psb30/Ycf12, peripheral proteins of the oxygen-evolving complex and a large number of cofactors. It forms dimeric complexes.

Its subcellular location is the plastid. It localises to the chloroplast thylakoid membrane. A core subunit of photosystem II (PSII), probably helps stabilize the reaction center. The sequence is that of Photosystem II reaction center protein Psb30 from Phacus acuminatus.